Consider the following 124-residue polypeptide: uncharacterized protein (124 aa).

The signal sequence occupies residues 1–21 (MFLLSLLHFFHPSLIPSLSLS).

This is an uncharacterized protein from Schizosaccharomyces pombe (strain 972 / ATCC 24843) (Fission yeast).